We begin with the raw amino-acid sequence, 90 residues long: Co-chaperonin GroES (90 aa).

The protein belongs to the GroES chaperonin family. Heptamer of 7 subunits arranged in a ring. Interacts with the chaperonin GroEL.

The protein resides in the cytoplasm. Functionally, together with the chaperonin GroEL, plays an essential role in assisting protein folding. The GroEL-GroES system forms a nano-cage that allows encapsulation of the non-native substrate proteins and provides a physical environment optimized to promote and accelerate protein folding. GroES binds to the apical surface of the GroEL ring, thereby capping the opening of the GroEL channel. This Thermosipho melanesiensis (strain DSM 12029 / CIP 104789 / BI429) protein is Co-chaperonin GroES.